Here is a 556-residue protein sequence, read N- to C-terminus: TNF receptor-associated factor 6-A (556 aa).

The segment at 72–111 (CPICLMALREAVQTPCGHRFCKACILKSLRNAGHKCPVDN) adopts an RING-type; degenerate zinc-finger fold. 2 TRAF-type zinc fingers span residues 148–204 (RHLE…EDKS) and 205–261 (GHEL…HNLA). Residues 384-533 (NGVFIWRIKG…NDTLLVRCSV (150 aa)) form the MATH domain.

This sequence belongs to the TNF receptor-associated factor family. A subfamily. As to quaternary structure, homotrimer. Homooligomer. Interacts with tifa. As to expression, highly expressed in ovary and moderately expressed in kidney, spleen, stomach, colon and testis.

It is found in the cytoplasm. The protein localises to the cell cortex. Its subcellular location is the nucleus. The protein resides in the lipid droplet. The enzyme catalyses S-ubiquitinyl-[E2 ubiquitin-conjugating enzyme]-L-cysteine + [acceptor protein]-L-lysine = [E2 ubiquitin-conjugating enzyme]-L-cysteine + N(6)-ubiquitinyl-[acceptor protein]-L-lysine.. It participates in protein modification; protein ubiquitination. Its function is as follows. E3 ubiquitin ligase that, together with UBE2N and UBE2V1, mediates the synthesis of 'Lys-63'-linked-polyubiquitin chains conjugated to proteins, such as IKBKG, IRAK1, AKT1 and AKT2. Also mediates ubiquitination of free/unanchored polyubiquitin chain that leads to MAP3K7 activation. The sequence is that of TNF receptor-associated factor 6-A (traf6-a) from Xenopus laevis (African clawed frog).